The following is a 494-amino-acid chain: V-type proton ATPase subunit B (494 aa).

Arg384 serves as a coordination point for ATP.

The protein belongs to the ATPase alpha/beta chains family. As to quaternary structure, V-ATPase is a heteromultimeric enzyme made up of two complexes: the ATP-hydrolytic V1 complex and the proton translocation V0 complex. The V1 complex consists of three catalytic AB heterodimers that form a heterohexamer, three peripheral stalks each consisting of EG heterodimers, one central rotor including subunits D and F, and the regulatory subunits C and H. The proton translocation complex V0 consists of the proton transport subunit a, a ring of proteolipid subunits c9c'', rotary subunit d, subunits e and f, and the accessory subunits VhaAC45 and ATP6AP2.

Functionally, non-catalytic subunit of the V1 complex of vacuolar(H+)-ATPase (V-ATPase), a multisubunit enzyme composed of a peripheral complex (V1) that hydrolyzes ATP and a membrane integral complex (V0) that translocates protons. V-ATPase is responsible for acidifying and maintaining the pH of intracellular compartments and in some cell types, is targeted to the plasma membrane, where it is responsible for acidifying the extracellular environment. Essential for the proper assembly and activity of V-ATPase. The sequence is that of V-type proton ATPase subunit B (VHA55) from Manduca sexta (Tobacco hawkmoth).